Reading from the N-terminus, the 297-residue chain is Putative peptidyl-prolyl cis-trans isomerase YacD (297 aa).

Residues 1–32 (MKSRTIWTIILGALLVCCIAVAYTLTKSQAGA) form the signal peptide. The 94-residue stretch at 154–247 (DDSYRIRHIV…NGYAIIQLKE (94 aa)) folds into the PpiC domain.

It carries out the reaction [protein]-peptidylproline (omega=180) = [protein]-peptidylproline (omega=0). The protein is Putative peptidyl-prolyl cis-trans isomerase YacD (yacD) of Bacillus subtilis (strain 168).